The chain runs to 82 residues: Sulfur carrier protein TusA (82 aa).

The active-site Cysteine persulfide intermediate is cysteine 19.

This sequence belongs to the sulfur carrier protein TusA family.

The protein localises to the cytoplasm. Its function is as follows. Sulfur carrier protein which probably makes part of a sulfur-relay system. The sequence is that of Sulfur carrier protein TusA from Vibrio cholerae serotype O1 (strain ATCC 39541 / Classical Ogawa 395 / O395).